A 266-amino-acid chain; its full sequence is Respiratory nitrate reductase beta chain (266 aa).

2 4Fe-4S ferredoxin-type domains span residues 3-32 (VGMVLNLDKCIGCHTCSVTCKEGMEYAWFN) and 30-61 (WFNNVESKLCEHCLNPACVATCPSGAIYKREE). Residues Cys12, Cys15, Cys18, Cys22, Cys39, Cys42, and Cys47 each coordinate [4Fe-4S] cluster. Residues Cys51 and Cys73 each coordinate [3Fe-4S] cluster. Residues Cys77, Cys81, Cys84, Cys96, and Cys100 each coordinate [4Fe-4S] cluster.

In terms of assembly, heterotrimer composed of an alpha, a beta and a gamma chain. Alpha and beta are catalytic chains; gamma chains are involved in binding the enzyme complex to the cytoplasmic membrane. [4Fe-4S] cluster is required as a cofactor. The cofactor is [3Fe-4S] cluster.

The protein localises to the cell membrane. Its subcellular location is the cytoplasm. The catalysed reaction is nitrate + a quinol = a quinone + nitrite + H2O. Inhibited by micromolar concentrations of azide. The nitrate reductase enzyme complex allows Bradyrhizobium sp. USDA 3045 to use nitrate as an electron acceptor during anaerobic growth. The beta chain is an electron transfer unit containing four cysteine clusters involved in the formation of iron-sulfur centers. Electrons are transferred from the gamma chain to the molybdenum cofactor of the alpha subunit. The sequence is that of Respiratory nitrate reductase beta chain (narH) from Bradyrhizobium sp.